Reading from the N-terminus, the 141-residue chain is Large ribosomal subunit protein uL11 (141 aa).

Belongs to the universal ribosomal protein uL11 family. As to quaternary structure, part of the ribosomal stalk of the 50S ribosomal subunit. Interacts with L10 and the large rRNA to form the base of the stalk. L10 forms an elongated spine to which L12 dimers bind in a sequential fashion forming a multimeric L10(L12)X complex. In terms of processing, one or more lysine residues are methylated.

In terms of biological role, forms part of the ribosomal stalk which helps the ribosome interact with GTP-bound translation factors. This is Large ribosomal subunit protein uL11 from Alkaliphilus oremlandii (strain OhILAs) (Clostridium oremlandii (strain OhILAs)).